Consider the following 473-residue polypeptide: MARGLGAPHRVAVGLLTWAALGLLVAGHGGHGDLYEDLQEDLHGHSHRHSHEDFHHGHSHAHGHGHTHESIWHGHTHGHDHGHSHEDLHHGHIHGDSHESLYHPGHGHDHEHSHGGYGESGAPGIKQDLDTVTLWAYALGATVLISAAPFFVLFLIPVESNSPRHRSLLQILLSFASGGLLGDAFLHLIPHALEPHSHHPLEQPGHGHSHSGQGPILSVGLWVLSGIVAFLVVEKFVRHVKGGHEHSHGHGHAHGHTHGGDSPFEDILVECPSKEKQSSEEEEKEAGASRKRRGGSTRPKDGPVRPQHSGEEKAGSDLRVSGYLNLAADLAHNFTDGLAIGASFRGGRGLGILTTMTVLLHEVPHEVGDFAILVQSGCSKKQAMRLQLLTAVGALAGTAFALLTEGGAAGSEVAGGTGPGWVLPFTAGDQAATQASPRSTSLPPVGEEDFREDPGPRQKGQQEKSGINVNCVS.

The chain crosses the membrane as a helical span at residues 11–31; it reads VAVGLLTWAALGLLVAGHGGH. Composition is skewed to basic and acidic residues over residues 44–56 and 66–114; these read GHSH…DFHH and HTHE…EHSH. The interval 44-120 is disordered; sequence GHSHRHSHED…EHSHGGYGES (77 aa). Pros-methylhistidine is present on H66. 3 consecutive transmembrane segments (helical) span residues 138 to 158, 169 to 189, and 214 to 234; these read ALGA…LIPV, LQIL…LHLI, and GPIL…LVVE. The interval 243–316 is disordered; that stretch reads GHEHSHGHGH…QHSGEEKAGS (74 aa). 2 positions are modified to phosphoserine: S278 and S279. A compositionally biased stretch (basic and acidic residues) spans 298-316; the sequence is RPKDGPVRPQHSGEEKAGS. A helical transmembrane segment spans residues 388–408; the sequence is LLTAVGALAGTAFALLTEGGA. The disordered stretch occupies residues 428–473; sequence GDQAATQASPRSTSLPPVGEEDFREDPGPRQKGQQEKSGINVNCVS. Residues 431 to 442 show a composition bias toward polar residues; the sequence is AATQASPRSTSL. Residues 452–462 are compositionally biased toward basic and acidic residues; sequence EDPGPRQKGQQ. Residues 463 to 473 are compositionally biased toward polar residues; sequence EKSGINVNCVS.

This sequence belongs to the ZIP transporter (TC 2.A.5) family. KE4/Catsup subfamily. Homodimer. In terms of processing, methylation at some His residue by METTL9 leads to reduced zinc-binding. Post-translationally, rapidly phosphorylated by CK2 following Zn(2+) treatment. This phosphorylation is required for efficient cytosolic Zn(2+) release.

Its subcellular location is the endoplasmic reticulum membrane. The protein localises to the golgi apparatus. It is found in the cis-Golgi network membrane. The enzyme catalyses Zn(2+)(in) = Zn(2+)(out). Transports Zn(2+) from the endoplasmic reticulum (ER)/Golgi apparatus to the cytosol, playing an essential role in the regulation of cytosolic zinc levels. Acts as a gatekeeper of zinc release from intracellular stores, requiring post-translational activation by phosphorylation on residues, resulting in activation of multiple downstream pathways leading to cell growth and proliferation. Has an essential role in B cell development and is required for proper B cell receptor signaling. Plays an important role in maintaining intestinal epithelial homeostasis and skin dermis development by regulating ER function. Controls cell signaling pathways involved in glucose metabolism in skeletal muscle. Has a protective role against ER stress in different biological contexts. Mediates Zn(2+)-induced ferroptosis. In Sus scrofa (Pig), this protein is Zinc transporter SLC39A7 (SLC39A7).